A 99-amino-acid polypeptide reads, in one-letter code: YcgL domain-containing protein HD_1373 (99 aa).

The region spanning 8-92 (NFCAIYKSMS…PAENLLKQFL (85 aa)) is the YcgL domain.

The protein is YcgL domain-containing protein HD_1373 of Haemophilus ducreyi (strain 35000HP / ATCC 700724).